A 579-amino-acid polypeptide reads, in one-letter code: Probable serine/threonine-protein kinase kinY (579 aa).

The interval 1–24 (MINGEQTMVEDELPDQGKPMSDES) is disordered. The Protein kinase domain occupies 32–309 (LKVGESIGSG…HVLKQLTSLF (278 aa)). ATP is bound by residues 38 to 46 (IGSGAYGIV) and Lys-59. Asp-167 acts as the Proton acceptor in catalysis.

Belongs to the protein kinase superfamily. TKL Ser/Thr protein kinase family.

It catalyses the reaction L-seryl-[protein] + ATP = O-phospho-L-seryl-[protein] + ADP + H(+). The enzyme catalyses L-threonyl-[protein] + ATP = O-phospho-L-threonyl-[protein] + ADP + H(+). The chain is Probable serine/threonine-protein kinase kinY (kinY) from Dictyostelium discoideum (Social amoeba).